We begin with the raw amino-acid sequence, 160 residues long: Putative pre-16S rRNA nuclease (160 aa).

Belongs to the YqgF nuclease family.

It localises to the cytoplasm. Functionally, could be a nuclease involved in processing of the 5'-end of pre-16S rRNA. The chain is Putative pre-16S rRNA nuclease from Cereibacter sphaeroides (strain KD131 / KCTC 12085) (Rhodobacter sphaeroides).